A 356-amino-acid chain; its full sequence is Altered inheritance of mitochondria protein 23, mitochondrial (356 aa).

A mitochondrion-targeting transit peptide spans 1–32; that stretch reads MLKVPLSDVLSQKMLFLKSFRYFHCTKYFSRD.

This sequence belongs to the AIM23 family.

Its subcellular location is the mitochondrion. The polypeptide is Altered inheritance of mitochondria protein 23, mitochondrial (AIM23) (Saccharomyces cerevisiae (strain RM11-1a) (Baker's yeast)).